We begin with the raw amino-acid sequence, 292 residues long: uncharacterized protein (292 aa).

The 59-residue stretch at 1-59 (MTITQLKVFVKIAETGSFTKAGQALNMTQPAVSHAISAIEAELDVKLIIRDRRNGLMLT) folds into the HTH lysR-type domain. Positions 18 to 37 (FTKAGQALNMTQPAVSHAIS) form a DNA-binding region, H-T-H motif.

The protein belongs to the LysR transcriptional regulatory family.

This is an uncharacterized protein from Bacillus subtilis (strain 168).